A 92-amino-acid polypeptide reads, in one-letter code: MTRSVWKGPFVDGYMLNKADASRASGRNEIIKIWSRRSTILPQFVGLTFGVYNGRKFLPVQVTENMVGHKFGEFSPTRTFNGHAADKKAKRG.

The protein belongs to the universal ribosomal protein uS19 family.

Functionally, protein S19 forms a complex with S13 that binds strongly to the 16S ribosomal RNA. The protein is Small ribosomal subunit protein uS19 of Acidiphilium cryptum (strain JF-5).